The sequence spans 320 residues: Phosphatidylserine decarboxylase proenzyme (320 aa).

Catalysis depends on charge relay system; for autoendoproteolytic cleavage activity residues Asp-90, His-147, and Ser-254. Residue Ser-254 is the Schiff-base intermediate with substrate; via pyruvic acid; for decarboxylase activity of the active site. Ser-254 carries the post-translational modification Pyruvic acid (Ser); by autocatalysis. Positions 288–320 are disordered; it reads EASTAAEPAPLPEEEIRAEHRASPLVDDTQDQG.

The protein belongs to the phosphatidylserine decarboxylase family. PSD-B subfamily. Prokaryotic type I sub-subfamily. Heterodimer of a large membrane-associated beta subunit and a small pyruvoyl-containing alpha subunit. The cofactor is pyruvate. Post-translationally, is synthesized initially as an inactive proenzyme. Formation of the active enzyme involves a self-maturation process in which the active site pyruvoyl group is generated from an internal serine residue via an autocatalytic post-translational modification. Two non-identical subunits are generated from the proenzyme in this reaction, and the pyruvate is formed at the N-terminus of the alpha chain, which is derived from the carboxyl end of the proenzyme. The autoendoproteolytic cleavage occurs by a canonical serine protease mechanism, in which the side chain hydroxyl group of the serine supplies its oxygen atom to form the C-terminus of the beta chain, while the remainder of the serine residue undergoes an oxidative deamination to produce ammonia and the pyruvoyl prosthetic group on the alpha chain. During this reaction, the Ser that is part of the protease active site of the proenzyme becomes the pyruvoyl prosthetic group, which constitutes an essential element of the active site of the mature decarboxylase.

It is found in the cell membrane. It catalyses the reaction a 1,2-diacyl-sn-glycero-3-phospho-L-serine + H(+) = a 1,2-diacyl-sn-glycero-3-phosphoethanolamine + CO2. The protein operates within phospholipid metabolism; phosphatidylethanolamine biosynthesis; phosphatidylethanolamine from CDP-diacylglycerol: step 2/2. Catalyzes the formation of phosphatidylethanolamine (PtdEtn) from phosphatidylserine (PtdSer). The chain is Phosphatidylserine decarboxylase proenzyme from Klebsiella pneumoniae (strain 342).